Here is a 151-residue protein sequence, read N- to C-terminus: Transcriptional repressor NrdR (151 aa).

A zinc finger lies at 3-34; sequence CPFCGYSESKVVDSRSTEDNMAIRRRRECLEC. One can recognise an ATP-cone domain in the interval 49 to 139; sequence ILVIKKDSSR…VYRQFKDINT (91 aa).

The protein belongs to the NrdR family. Zn(2+) is required as a cofactor.

Negatively regulates transcription of bacterial ribonucleotide reductase nrd genes and operons by binding to NrdR-boxes. This Clostridium acetobutylicum (strain ATCC 824 / DSM 792 / JCM 1419 / IAM 19013 / LMG 5710 / NBRC 13948 / NRRL B-527 / VKM B-1787 / 2291 / W) protein is Transcriptional repressor NrdR.